Here is a 279-residue protein sequence, read N- to C-terminus: Universal stress protein MT2087 (279 aa).

It belongs to the universal stress protein A family.

This Mycobacterium tuberculosis (strain CDC 1551 / Oshkosh) protein is Universal stress protein MT2087.